A 547-amino-acid polypeptide reads, in one-letter code: Rho GTPase-activating protein 36 (547 aa).

The first 40 residues, 1–40 (MGGCNPFLKAARTLCPRIMPPLLFLSAFIFLVNVLGGAPG), serve as a signal peptide directing secretion. Positions 226–426 (MSLNPIAKQI…AMIDNWDILF (201 aa)) constitute a Rho-GAP domain. A disordered region spans residues 493–547 (FDEGSSEEPAVPPGTAHSHDDEEGAGNPPIPEQDRPLLRVPREKQAKTGIGYFFP). Residues 524-538 (EQDRPLLRVPREKQA) are compositionally biased toward basic and acidic residues.

GTPase activator for the Rho-type GTPases by converting them to an inactive GDP-bound state. This Ailuropoda melanoleuca (Giant panda) protein is Rho GTPase-activating protein 36 (ARHGAP36).